The primary structure comprises 66 residues: Large ribosomal subunit protein bL31 (66 aa).

Residues Cys-16, Cys-18, Cys-36, and Cys-39 each coordinate Zn(2+).

The protein belongs to the bacterial ribosomal protein bL31 family. Type A subfamily. In terms of assembly, part of the 50S ribosomal subunit. The cofactor is Zn(2+).

In terms of biological role, binds the 23S rRNA. This chain is Large ribosomal subunit protein bL31, found in Nautilia profundicola (strain ATCC BAA-1463 / DSM 18972 / AmH).